A 180-amino-acid polypeptide reads, in one-letter code: 3-hydroxyanthranilate 3,4-dioxygenase (180 aa).

Residue arginine 44 participates in O2 binding. Residues histidine 48, glutamate 54, and histidine 92 each contribute to the Fe cation site. Glutamate 54 is a binding site for substrate. Substrate contacts are provided by arginine 96 and glutamate 106. Cysteine 121, cysteine 124, cysteine 158, and cysteine 161 together coordinate a divalent metal cation.

It belongs to the 3-HAO family. Fe(2+) serves as cofactor.

Its subcellular location is the cytoplasm. The catalysed reaction is 3-hydroxyanthranilate + O2 = (2Z,4Z)-2-amino-3-carboxymuconate 6-semialdehyde. It functions in the pathway cofactor biosynthesis; NAD(+) biosynthesis; quinolinate from L-kynurenine: step 3/3. Functionally, catalyzes the oxidative ring opening of 3-hydroxyanthranilate to 2-amino-3-carboxymuconate semialdehyde, which spontaneously cyclizes to quinolinate. The protein is 3-hydroxyanthranilate 3,4-dioxygenase (bna1) of Neurospora crassa (strain ATCC 24698 / 74-OR23-1A / CBS 708.71 / DSM 1257 / FGSC 987).